The primary structure comprises 371 residues: DNA replication and repair protein RecF (371 aa).

Position 30–37 (30–37 (GPNAQGKT)) interacts with ATP.

It belongs to the RecF family.

It is found in the cytoplasm. In terms of biological role, the RecF protein is involved in DNA metabolism; it is required for DNA replication and normal SOS inducibility. RecF binds preferentially to single-stranded, linear DNA. It also seems to bind ATP. The sequence is that of DNA replication and repair protein RecF from Desulforamulus reducens (strain ATCC BAA-1160 / DSM 100696 / MI-1) (Desulfotomaculum reducens).